The chain runs to 930 residues: Isoleucine--tRNA ligase (930 aa).

The 'HIGH' region motif lies at Pro57 to His67. An L-isoleucyl-5'-AMP-binding site is contributed by Glu554. The short motif at Lys595–Ser599 is the 'KMSKS' region element. ATP is bound at residue Lys598.

It belongs to the class-I aminoacyl-tRNA synthetase family. IleS type 1 subfamily. Monomer.

The protein localises to the cytoplasm. It catalyses the reaction tRNA(Ile) + L-isoleucine + ATP = L-isoleucyl-tRNA(Ile) + AMP + diphosphate. In terms of biological role, catalyzes the attachment of isoleucine to tRNA(Ile). As IleRS can inadvertently accommodate and process structurally similar amino acids such as valine, to avoid such errors it has two additional distinct tRNA(Ile)-dependent editing activities. One activity is designated as 'pretransfer' editing and involves the hydrolysis of activated Val-AMP. The other activity is designated 'posttransfer' editing and involves deacylation of mischarged Val-tRNA(Ile). This chain is Isoleucine--tRNA ligase, found in Streptococcus agalactiae serotype Ia (strain ATCC 27591 / A909 / CDC SS700).